The chain runs to 334 residues: MNLLLLLAVLCLGTALATPKFDQTFSAEWHQWKSTHRRLYGTNEEEWRRAIWEKNMRMIQLHNGEYSNGQHGFSMEMNAFGDMTNEEFRQVVNGYRHQKHKKGRLFQEPLMLKIPKSVDWREKGCVTPVKNQGQCGSCWAFSASGCLEGQMFLKTGKLISLSEQNLVDCSHAQGNQGCNGGLMDFAFQYIKENGGLDSEESYPYEAKDGSCKYRAEFAVANDTGFVDIPQQEKALMKAVATVGPISVAMDASHPSLQFYSSGIYYEPNCSSKNLDHGVLLVGYGYEGTDSNKNKYWLVKNSWGSEWGMEGYIKIAKDRDNHCGLATAASYPVVN.

The signal sequence occupies residues Met-1–Ala-17. Positions Thr-18–Lys-113 are cleaved as a propeptide — activation peptide. A Zn(2+)-binding site is contributed by Glu-122. 2 cysteine pairs are disulfide-bonded: Cys-135–Cys-178 and Cys-169–Cys-211. Cys-138 is an active-site residue. Zn(2+) contacts are provided by Glu-163, Asp-184, Glu-199, and Glu-205. N-linked (GlcNAc...) (high mannose) asparagine glycosylation is present at Asn-221. Residues Asp-227, Asp-250, His-253, and Asp-275 each coordinate Zn(2+). A disulfide bridge connects residues Cys-269 and Cys-322. His-276 is a catalytic residue. Positions Asp-289–Ser-290 are excised as a propeptide. Residue Asn-300 is part of the active site.

It belongs to the peptidase C1 family. In terms of assembly, dimer of a heavy and a light chain linked by disulfide bonds. Interacts with Long isoform of CD74/Ii chain; the interaction stabilizes the conformation of mature CTSL. In terms of processing, during export along the endocytic pathway, pro-CTSL undergoes several proteolytic cleavages to generate the CTSL single-chain and two-chain mature forms, composed of a heavy chain linked to a light chain by disulfide bonds. Autocleavage; produces the single-chain CTSL after cleavage of the propeptide. The cleavage can be intermolecular. In terms of tissue distribution, expressed in thymus, kidney and liver. Expressed in thyroid epithelial cells. Expressed in cortical thymic epithelial cells. Expressed by antigen presenting cells (APCs) such as dendritic cells and macrophages.

It is found in the lysosome. It localises to the apical cell membrane. The protein resides in the secreted. Its subcellular location is the extracellular space. The protein localises to the cytoplasmic vesicle. It is found in the secretory vesicle. It localises to the chromaffin granule. It catalyses the reaction Specificity close to that of papain. As compared to cathepsin B, cathepsin L exhibits higher activity toward protein substrates, but has little activity on Z-Arg-Arg-NHMec, and no peptidyl-dipeptidase activity.. With respect to regulation, long isoform of CD74/Ii chain stabilizes the conformation of mature CTSL by binding to its active site and serving as a chaperone to help maintain a pool of mature enzyme in endocytic compartments and extracellular space of APCs. IFNG enhances the conversion into the CTSL mature and active form. Inhibited by CST6. Inhibited by the glycopeptide antibiotic teicoplanin. Inhibited by amantadine. Thiol protease important for the overall degradation of proteins in lysosomes. Involved in the solubilization of cross-linked TG/thyroglobulin and in the subsequent release of thyroid hormone thyroxine (T4) by limited proteolysis of TG/thyroglobulin in the thyroid follicle lumen. In neuroendocrine chromaffin cells secretory vesicles, catalyzes the prohormone proenkephalin processing to the active enkephalin peptide neurotransmitter. In thymus, regulates CD4(+) T cell positive selection by generating the major histocompatibility complex class II (MHCII) bound peptide ligands presented by cortical thymic epithelial cells. Also mediates invariant chain processing in cortical thymic epithelial cells. Major elastin-degrading enzyme at neutral pH. Accumulates as a mature and active enzyme in the extracellular space of antigen presenting cells (APCs) to regulate degradation of the extracellular matrix in the course of inflammation. Secreted form generates endostatin from COL18A1. Critical for cardiac morphology and function. Plays an important role in hair follicle morphogenesis and cycling, as well as epidermal differentiation. Required for maximal stimulation of steroidogenesis by TIMP1. This Mus musculus (Mouse) protein is Procathepsin L.